Consider the following 295-residue polypeptide: UTP--glucose-1-phosphate uridylyltransferase (295 aa).

It belongs to the UDPGP type 2 family.

The catalysed reaction is alpha-D-glucose 1-phosphate + UTP + H(+) = UDP-alpha-D-glucose + diphosphate. In terms of biological role, may play a role in stationary phase survival. This is UTP--glucose-1-phosphate uridylyltransferase (galU) from Haemophilus ducreyi (strain 35000HP / ATCC 700724).